A 264-amino-acid polypeptide reads, in one-letter code: Small ribosomal subunit protein uS2 (264 aa).

It belongs to the universal ribosomal protein uS2 family.

The protein is Small ribosomal subunit protein uS2 of Latilactobacillus sakei subsp. sakei (strain 23K) (Lactobacillus sakei subsp. sakei).